Reading from the N-terminus, the 1066-residue chain is Coiled-coil domain-containing protein 73 (1066 aa).

Coiled coils occupy residues 47–134 (KAET…QVSQ) and 178–391 (LVRE…KTEE). Disordered stretches follow at residues 568–600 (LDTRSNKASSNGMSNEMAHKRNYNTDGSESNPF), 719–811 (SENS…PKSG), 854–883 (LSPATPSADSVSTSARSAFDLPSPDKPEKT), 944–978 (KNIESDPTSNSRAADTMSNWSIHLDPKGQPREERN), and 1003–1027 (VQQSHSQTVKVTDSPDPLTFSPGNN). 5 stretches are compositionally biased toward polar residues: residues 591–600 (NTDGSESNPF), 742–781 (RTNTNDIQNSSLRNHLGASESSVSVSDFQVNQGDSHTSQA), 789–811 (PLTTSSEKQPPSESQITETPKSG), 857–869 (ATPSADSVSTSAR), and 948–964 (SDPTSNSRAADTMSNWS). The span at 967–978 (LDPKGQPREERN) shows a compositional bias: basic and acidic residues. The span at 1003 to 1013 (VQQSHSQTVKV) shows a compositional bias: polar residues.

This is Coiled-coil domain-containing protein 73 (Ccdc73) from Mus musculus (Mouse).